A 277-amino-acid chain; its full sequence is Shikimate dehydrogenase (NADP(+)) (277 aa).

Residues 15–17 (SLS) and Thr-62 each bind shikimate. The active-site Proton acceptor is Lys-66. Shikimate is bound by residues Asn-87 and Asp-102. NADP(+) contacts are provided by residues 127–131 (GAGGA), 151–156 (NRTVDK), and Ile-219. Residue Tyr-221 participates in shikimate binding. Gly-242 provides a ligand contact to NADP(+).

This sequence belongs to the shikimate dehydrogenase family. In terms of assembly, homodimer.

It carries out the reaction shikimate + NADP(+) = 3-dehydroshikimate + NADPH + H(+). The protein operates within metabolic intermediate biosynthesis; chorismate biosynthesis; chorismate from D-erythrose 4-phosphate and phosphoenolpyruvate: step 4/7. Involved in the biosynthesis of the chorismate, which leads to the biosynthesis of aromatic amino acids. Catalyzes the reversible NADPH linked reduction of 3-dehydroshikimate (DHSA) to yield shikimate (SA). The chain is Shikimate dehydrogenase (NADP(+)) from Bacillus cereus (strain ATCC 10987 / NRS 248).